The following is a 49-amino-acid chain: Large ribosomal subunit protein bL33B (49 aa).

The protein belongs to the bacterial ribosomal protein bL33 family.

The chain is Large ribosomal subunit protein bL33B (rpmGB) from Bacillus licheniformis.